Consider the following 518-residue polypeptide: Organic cation/carnitine transporter 3 (518 aa).

The interval 1–23 (MADSTRPLLSDFNSSESNLPPPR) is disordered. The Cytoplasmic portion of the chain corresponds to 1-32 (MADSTRPLLSDFNSSESNLPPPRSLEETIERC). Residues 33 to 53 (IGDFGWAQFLQAALVSFAWFF) form a helical membrane-spanning segment. Topologically, residues 54 to 122 (DAQQTFITVF…LQCAGSFLKG (69 aa)) are extracellular. Residues asparagine 83 and asparagine 94 are each glycosylated (N-linked (GlcNAc...) asparagine). A helical transmembrane segment spans residues 123-143 (FPASSFFLGCLIGGLALSTLA). Residues 144–157 (DSSLGRKNMLLLSC) lie on the Cytoplasmic side of the membrane. Residues 158 to 178 (LIMSLSSMLTAFSTSIWVYAF) form a helical membrane-spanning segment. Over 179-180 (LR) the chain is Extracellular. The chain crosses the membrane as a helical span at residues 181 to 197 (FLNGCGRATIGTCALVL). 198 to 205 (STELVGKK) is a binding site for ATP. At 198–210 (STELVGKKWRGQV) the chain is on the cytoplasmic side. A helical transmembrane segment spans residues 211 to 231 (GAMGFFCFTLGFLSLPMLGYI). Residues 232-239 (NEGNSWRN) are Extracellular-facing. The helical transmembrane segment at 240–259 (LYVWTSIPTLIYCCLVRSFV) threads the bilayer. The Cytoplasmic portion of the chain corresponds to 260 to 325 (RESPRWLIVK…LVRKSWSFRR (66 aa)). Residues 326–346 (LLAAMVVGFGIGMVYYGMPLA) traverse the membrane as a helical segment. The Extracellular segment spans residues 347–355 (LTNLNFNLY). Residues 356–376 (LGVVFNALSEFPAFLITFFFI) traverse the membrane as a helical segment. Topologically, residues 377–383 (DKINRRD) are cytoplasmic. A helical transmembrane segment spans residues 384–404 (ALIGFTALSGISSALIAVLGQ). Residues 405–410 (QLGSLQ) lie on the Extracellular side of the membrane. The helical transmembrane segment at 411–431 (IVLELVSFFSACTAFNMTLIY) threads the bilayer. Over 432–443 (TIEMFPTCVRNS) the chain is Cytoplasmic. Residues 444–464 (AISMVRQALVFGGVFSPVMVA) form a helical membrane-spanning segment. Topologically, residues 465–470 (AGRENQ) are extracellular. A helical membrane pass occupies residues 471-491 (FWSYGLFGLIIGLCGLFVFGL). The Cytoplasmic portion of the chain corresponds to 492 to 518 (PETRGSVLCDTMDEEEYKTLAKRQFIG).

This sequence belongs to the major facilitator (TC 2.A.1) superfamily. Organic cation transporter (TC 2.A.1.19) family. In terms of tissue distribution, mostly expressed in siliques, mainly in young seeds. Present in stems (cortical cells and parenchyma cells), at the basis of secondary inflorescences, and at the base of trichomes.

Its subcellular location is the vacuole membrane. High affinity carnitine transporter involved in the active cellular uptake of carnitine. Also transports organic cations. In Arabidopsis thaliana (Mouse-ear cress), this protein is Organic cation/carnitine transporter 3 (OCT3).